The following is a 639-amino-acid chain: Phosphomethylpyrimidine synthase (639 aa).

The interval 49–71 (DTPTDFGGEQNRPVRVYDTSGPY) is disordered. Residues N231, M260, Y289, H325, 345–347 (SRG), 386–389 (DGLR), and E425 contribute to the substrate site. A Zn(2+)-binding site is contributed by H429. Y452 is a substrate binding site. A Zn(2+)-binding site is contributed by H493. [4Fe-4S] cluster-binding residues include C573, C576, and C581.

This sequence belongs to the ThiC family. In terms of assembly, homodimer. Requires [4Fe-4S] cluster as cofactor.

It catalyses the reaction 5-amino-1-(5-phospho-beta-D-ribosyl)imidazole + S-adenosyl-L-methionine = 4-amino-2-methyl-5-(phosphooxymethyl)pyrimidine + CO + 5'-deoxyadenosine + formate + L-methionine + 3 H(+). It participates in cofactor biosynthesis; thiamine diphosphate biosynthesis. Functionally, catalyzes the synthesis of the hydroxymethylpyrimidine phosphate (HMP-P) moiety of thiamine from aminoimidazole ribotide (AIR) in a radical S-adenosyl-L-methionine (SAM)-dependent reaction. In Teredinibacter turnerae (strain ATCC 39867 / T7901), this protein is Phosphomethylpyrimidine synthase.